The chain runs to 92 residues: Promotilin (92 aa).

The disordered stretch occupies residues 12-49 (RMQEKERNRGQKKSLGLQQRSEEVGSLDPTEAAEEEGK).

Belongs to the motilin family.

Its subcellular location is the secreted. Its function is as follows. Plays an important role in the regulation of interdigestive gastrointestinal motility and indirectly causes rhythmic contraction of duodenal and colonic smooth muscle. This chain is Promotilin (MLN), found in Equus caballus (Horse).